A 398-amino-acid polypeptide reads, in one-letter code: MNTLDFDKRPEDTRIVVAMSGGVDSSVVAGILKREGYDVLGITLQLYDHGAAVHRAGSCCAGQDIDDARRVCETLGIPHYVLDYEARFRETVINPFAEAYAMGETPIPCVACNQTVKFADLLATAQELGADALATGHYIRSRPNPVSGQPGRRALYRPIDSDRDQSWFLFATTQEQIDYLRFPLGGLSKAETRALAEEMGLVVAKKADSQDICFVPQGKYTDIINKLKPNAALAGDIVHLDGRVLGRHDGIVHYTIGQRRGIGVATGEPLYVVHLDARGRRVIVGPREALETRRVYLRDMNWLGDGALAADAGQGFTCFAKVRSTRPPTEAVLHADENGIYVDLMTGEAGVAPGQACVLYSAPGPDARVYGGGFIDRSERSVDAEASLKALLEKPVAA.

Residues 18-25 and Leu44 contribute to the ATP site; that span reads AMSGGVDS. Residue Cys112 is the Nucleophile of the active site. A disulfide bridge connects residues Cys112 and Cys213. Gly136 contacts ATP. An interaction with tRNA region spans residues 163 to 165; sequence RDQ. Cys213 serves as the catalytic Cysteine persulfide intermediate.

Belongs to the MnmA/TRMU family.

Its subcellular location is the cytoplasm. It carries out the reaction S-sulfanyl-L-cysteinyl-[protein] + uridine(34) in tRNA + AH2 + ATP = 2-thiouridine(34) in tRNA + L-cysteinyl-[protein] + A + AMP + diphosphate + H(+). Its function is as follows. Catalyzes the 2-thiolation of uridine at the wobble position (U34) of tRNA, leading to the formation of s(2)U34. The chain is tRNA-specific 2-thiouridylase MnmA from Agrobacterium fabrum (strain C58 / ATCC 33970) (Agrobacterium tumefaciens (strain C58)).